Reading from the N-terminus, the 210-residue chain is Ribosomal RNA large subunit methyltransferase E (210 aa).

Gly-67, Trp-69, Asp-87, Asp-103, and Asp-128 together coordinate S-adenosyl-L-methionine. Lys-168 serves as the catalytic Proton acceptor.

It belongs to the class I-like SAM-binding methyltransferase superfamily. RNA methyltransferase RlmE family.

The protein resides in the cytoplasm. It catalyses the reaction uridine(2552) in 23S rRNA + S-adenosyl-L-methionine = 2'-O-methyluridine(2552) in 23S rRNA + S-adenosyl-L-homocysteine + H(+). Its function is as follows. Specifically methylates the uridine in position 2552 of 23S rRNA at the 2'-O position of the ribose in the fully assembled 50S ribosomal subunit. This is Ribosomal RNA large subunit methyltransferase E from Psychrobacter sp. (strain PRwf-1).